Reading from the N-terminus, the 359-residue chain is Fructose-bisphosphate aldolase (359 aa).

A D-glyceraldehyde 3-phosphate-binding site is contributed by Ser-50. Asp-83 functions as the Proton donor in the catalytic mechanism. His-84, Asp-105, Glu-142, and His-198 together coordinate Zn(2+). Position 199 (Gly-199) interacts with dihydroxyacetone phosphate. His-232 contacts Zn(2+). Residues 233 to 235 (GSS) and 275 to 278 (NIDT) each bind dihydroxyacetone phosphate.

This sequence belongs to the class II fructose-bisphosphate aldolase family. Homodimer. Zn(2+) is required as a cofactor.

The catalysed reaction is beta-D-fructose 1,6-bisphosphate = D-glyceraldehyde 3-phosphate + dihydroxyacetone phosphate. It participates in carbohydrate biosynthesis; Calvin cycle. The protein operates within carbohydrate degradation; glycolysis; D-glyceraldehyde 3-phosphate and glycerone phosphate from D-glucose: step 4/4. Its function is as follows. Catalyzes the aldol condensation of dihydroxyacetone phosphate (DHAP or glycerone-phosphate) with glyceraldehyde 3-phosphate (G3P) to form fructose 1,6-bisphosphate (FBP) in gluconeogenesis and the reverse reaction in glycolysis. This Sinorhizobium medicae (strain WSM419) (Ensifer medicae) protein is Fructose-bisphosphate aldolase (cbbA).